We begin with the raw amino-acid sequence, 320 residues long: Cytochrome f (320 aa).

The N-terminal stretch at 1–35 (MENRKTFSWLKEQMIRSISVSIMIYVITRTSISNA) is a signal peptide. Residues Tyr36, Cys56, Cys59, and His60 each coordinate heme. A helical membrane pass occupies residues 286-306 (VQGLLFFFASVILAQVFLVLK).

This sequence belongs to the cytochrome f family. The 4 large subunits of the cytochrome b6-f complex are cytochrome b6, subunit IV (17 kDa polypeptide, petD), cytochrome f and the Rieske protein, while the 4 small subunits are PetG, PetL, PetM and PetN. The complex functions as a dimer. Heme is required as a cofactor.

Its subcellular location is the plastid. It localises to the chloroplast thylakoid membrane. Functionally, component of the cytochrome b6-f complex, which mediates electron transfer between photosystem II (PSII) and photosystem I (PSI), cyclic electron flow around PSI, and state transitions. In Saccharum hybrid (Sugarcane), this protein is Cytochrome f.